Reading from the N-terminus, the 75-residue chain is Small ribosomal subunit protein bS18 (75 aa).

This sequence belongs to the bacterial ribosomal protein bS18 family. In terms of assembly, part of the 30S ribosomal subunit. Forms a tight heterodimer with protein bS6.

Its function is as follows. Binds as a heterodimer with protein bS6 to the central domain of the 16S rRNA, where it helps stabilize the platform of the 30S subunit. This chain is Small ribosomal subunit protein bS18 (rbsR), found in Rhodobacter capsulatus (strain ATCC BAA-309 / NBRC 16581 / SB1003).